We begin with the raw amino-acid sequence, 220 residues long: MEHPVFERDPSEKSETERREVPPLLKLALELGPLLVFFFANARGEMLIERFPILGSIGAPIFLATALFMAATVIALAISWSMTRTLPIMPLVSGIVVLVFGALTLWLHNDTFIKMKPTIVNTLFGGILLGGLFFGKSLLGYVFDSAFRLDAEGWRKLTLRWGLFFIFLAIVNEIVWRNFSTDTWVSFKVWGIMPITIVFTLLQMPLIQKHSLTDEENTAS.

6 helical membrane passes run 20-40, 57-77, 86-106, 123-143, 156-176, and 187-207; these read EVPP…FFFA, IGAP…IALA, LPIM…LTLW, LFGG…GYVF, KLTL…EIVW, and FKVW…MPLI.

Belongs to the YciB family.

It localises to the cell inner membrane. Its function is as follows. Plays a role in cell envelope biogenesis, maintenance of cell envelope integrity and membrane homeostasis. The sequence is that of Inner membrane-spanning protein YciB from Brucella abortus (strain S19).